The sequence spans 253 residues: Indole-3-glycerol phosphate synthase (253 aa).

This sequence belongs to the TrpC family.

The catalysed reaction is 1-(2-carboxyphenylamino)-1-deoxy-D-ribulose 5-phosphate + H(+) = (1S,2R)-1-C-(indol-3-yl)glycerol 3-phosphate + CO2 + H2O. The protein operates within amino-acid biosynthesis; L-tryptophan biosynthesis; L-tryptophan from chorismate: step 4/5. The chain is Indole-3-glycerol phosphate synthase from Bacillus thuringiensis subsp. konkukian (strain 97-27).